Here is a 366-residue protein sequence, read N- to C-terminus: Beta sliding clamp (366 aa).

The protein belongs to the beta sliding clamp family. Forms a ring-shaped head-to-tail homodimer around DNA which binds and tethers DNA polymerases and other proteins to the DNA. The DNA replisome complex has a single clamp-loading complex (3 tau and 1 each of delta, delta', psi and chi subunits) which binds 3 Pol III cores (1 core on the leading strand and 2 on the lagging strand) each with a beta sliding clamp dimer. Additional proteins in the replisome are other copies of gamma, psi and chi, Ssb, DNA helicase and RNA primase.

It is found in the cytoplasm. Functionally, confers DNA tethering and processivity to DNA polymerases and other proteins. Acts as a clamp, forming a ring around DNA (a reaction catalyzed by the clamp-loading complex) which diffuses in an ATP-independent manner freely and bidirectionally along dsDNA. Initially characterized for its ability to contact the catalytic subunit of DNA polymerase III (Pol III), a complex, multichain enzyme responsible for most of the replicative synthesis in bacteria; Pol III exhibits 3'-5' exonuclease proofreading activity. The beta chain is required for initiation of replication as well as for processivity of DNA replication. The polypeptide is Beta sliding clamp (dnaN) (Vibrio cholerae serotype O1 (strain ATCC 39315 / El Tor Inaba N16961)).